The following is a 533-amino-acid chain: Probable galacturonosyltransferase 13 (533 aa).

Over 1 to 40 (MQLHISPSMRSITISSSNEFIDLMKIKVAARHISYRTLFH) the chain is Cytoplasmic. The helical; Signal-anchor for type II membrane protein transmembrane segment at 41 to 61 (TILILAFLLPFVFILTAVVTL) threads the bilayer. Topologically, residues 62 to 533 (EGVNKCSSFD…DFIKNCHILE (472 aa)) are lumenal. Residues asparagine 306, asparagine 396, asparagine 445, and asparagine 520 are each glycosylated (N-linked (GlcNAc...) asparagine).

This sequence belongs to the glycosyltransferase 8 family. In terms of tissue distribution, expressed in roots, inflorescences, siliques, leaves and stems. Accumulates in pollen grains.

Its subcellular location is the golgi apparatus membrane. It functions in the pathway glycan metabolism; pectin biosynthesis. May be involved in pectin and/or xylans biosynthesis in cell walls. Together with GAUT14, required for pollen tube growth, possibly through the regulation of pectin biosynthesis and repartition in the pollen tube wall. The chain is Probable galacturonosyltransferase 13 from Arabidopsis thaliana (Mouse-ear cress).